Consider the following 583-residue polypeptide: Aspartate--tRNA(Asp/Asn) ligase (583 aa).

L-aspartate is bound at residue Glu-171. The aspartate stretch occupies residues 195 to 198; the sequence is QLFK. Arg-217 is an L-aspartate binding site. ATP contacts are provided by residues 217–219 and Gln-226; that span reads RDE. An L-aspartate-binding site is contributed by His-443. Residue Glu-476 coordinates ATP. Residue Arg-483 coordinates L-aspartate. 528 to 531 serves as a coordination point for ATP; that stretch reads GLDR.

This sequence belongs to the class-II aminoacyl-tRNA synthetase family. Type 1 subfamily. As to quaternary structure, homodimer.

The protein localises to the cytoplasm. It catalyses the reaction tRNA(Asx) + L-aspartate + ATP = L-aspartyl-tRNA(Asx) + AMP + diphosphate. Aspartyl-tRNA synthetase with relaxed tRNA specificity since it is able to aspartylate not only its cognate tRNA(Asp) but also tRNA(Asn). Reaction proceeds in two steps: L-aspartate is first activated by ATP to form Asp-AMP and then transferred to the acceptor end of tRNA(Asp/Asn). The sequence is that of Aspartate--tRNA(Asp/Asn) ligase from Ruthia magnifica subsp. Calyptogena magnifica.